Here is a 1089-residue protein sequence, read N- to C-terminus: GPI ethanolamine phosphate transferase 3, catalytic subunit (1089 aa).

A helical transmembrane segment spans residues 4-24; the sequence is ASVLLFLAWVCFLFYAGIALF. N-linked (GlcNAc...) asparagine glycosylation is present at Asn268. 13 helical membrane passes run 457–477, 482–502, 510–530, 541–561, 575–595, 668–688, 701–721, 747–767, 830–850, 857–877, 944–964, 1014–1034, and 1048–1068; these read LLAASCFICLLASQWAISPGF, LLLTPVAWGLVGAIAYAGLLG, LVLLGAVAAVSSFLPFLWKAW, TLFPIPGPVLLLLLFRLAVFF, FLLGSFILLLVVQLHWEGQLL, LWYGACVAALVALLAAVRLWL, MLFVRWGLPLMALGTAAYWAL, VAGLAASGLALLLWKPVTVLV, SVYSAAMVTALTLLAFPLLLL, LVFLLLFLQSFLLLHLLAAGI, FASHLLFAVGCPLLLLWPFLC, LKYLFILGIQILACALAASIL, and FIFEAVGFIVSSVGLLLGIAL.

Belongs to the PIGG/PIGN/PIGO family. PIGO subfamily. Part of the ethanolamine phosphate transferase 3 complex composed by PIGO and PIGF. PIGF is required to stabilize PIGO.

It is found in the endoplasmic reticulum membrane. It functions in the pathway glycolipid biosynthesis; glycosylphosphatidylinositol-anchor biosynthesis. Catalytic subunit of the ethanolamine phosphate transferase 3 complex that transfers an ethanolamine phosphate (EtNP) from a phosphatidylethanolamine (PE) to the 6-OH position of the third alpha-1,2-linked mannose of an alpha-D-Man-(1-&gt;2)-alpha-D-Man-(1-&gt;6)-2-PEtn-alpha-D-Man-(1-&gt;4)-alpha-D-GlcN-(1-&gt;6)-(1-radyl,2-acyl-sn-glycero-3-phospho)-2-acyl-inositol (also termed H6) intermediate to generate a 6-PEtn-alpha-D-Man-(1-&gt;2)-alpha-D-Man-(1-&gt;6)-2-PEtn-alpha-D-Man-(1-&gt;4)-alpha-D-GlcN-(1-&gt;6)-(1-radyl,2-acyl-sn-glycero-3-phospho)-2-acyl-inositol (also termed H7) and participates in the tenth step of the glycosylphosphatidylinositol-anchor biosynthesis. This chain is GPI ethanolamine phosphate transferase 3, catalytic subunit, found in Homo sapiens (Human).